Consider the following 509-residue polypeptide: Anaerobic nitric oxide reductase flavorubredoxin (509 aa).

Residues 30 to 210 (LQGSSYNSYL…PFSRLVTAKI (181 aa)) form a zinc metallo-hydrolase region. Residues H79, E81, D83, H147, D166, and H227 each coordinate Fe cation. The Flavodoxin-like domain maps to 254–393 (ITLFYDTMSN…VCREHGREIA (140 aa)). Residues 260–264 (TMSNN) and 342–369 (AFGSYGWNGGAVDRVQTRLMDAGFETTL) each bind FMN. In terms of domain architecture, Rubredoxin-like spans 457 to 508 (SGCMQCSVCQWIYDPALGEPMQDVTPGTMWSDVPDSFLCPECGLGKDVFNPI). 4 residues coordinate Fe cation: C462, C465, C495, and C498.

It in the N-terminal section; belongs to the zinc metallo-hydrolase group 3 family. As to quaternary structure, homotetramer. Requires Fe cation as cofactor. FMN is required as a cofactor.

The protein resides in the cytoplasm. The protein operates within nitrogen metabolism; nitric oxide reduction. In terms of biological role, anaerobic nitric oxide reductase; uses NADH to detoxify nitric oxide (NO), protecting several 4Fe-4S NO-sensitive enzymes. Has at least 2 reductase partners, only one of which (NorW, flavorubredoxin reductase) has been identified. NO probably binds to the di-iron center; electrons enter from the NorW at rubredoxin and are transferred sequentially to the FMN center and the di-iron center. Also able to function as an aerobic oxygen reductase. This chain is Anaerobic nitric oxide reductase flavorubredoxin, found in Pectobacterium atrosepticum (strain SCRI 1043 / ATCC BAA-672) (Erwinia carotovora subsp. atroseptica).